A 951-amino-acid chain; its full sequence is MPGPLRLLCFFALGLLGSAGPSGAAPPLCAAPCSCDGDRRVDCSGKGLTAVPEGLSAFTQALDISMNNITQLPEDAFKNFPFLEELQLAGNDLSFIHPKALSGLKELKVLTLQNNQLKTVPSEAIRGLSALQSLRLDANHITSVPEDSFEGLVQLRHLWLDDNILTEVPVRPLSNLPTLQALTLALNNISSIPDFAFTNLSSLVVLHLHNNKIKSLSQHCFDGLDNLETLDLNYNNLDEFPQAIKALPSLKELGFHSNSISVIPDGAFAGNPLLRTIHLYDNPLSFVGNSAFHNLSDLHSLVIRGASLVQWFPNLAGTVHLESLTLTGTKISSIPDDLCQNQKMLRTLDLSYNDIRDLPSFNGCRALEEISLQRNQISLIKETTFQGLTSLRILDLSRNLIREIHSGAFAKLGTITNLDVSFNELTSFPTEGLNGLNQLKLVGNFQLKDALAARDFANLRSLSVPYAYQCCAFWGCDSYANLNTEDNSPQDHSVTKEKGATDAANATSTAESEEHSQIIIHCTPSTGAFKPCEYLLGSWMIRLTVWFIFLVALLFNLLVILTVFASCSSLPASKLFIGLISVSNLLMGIYTGILTFLDAVSWGRFAEFGIWWETGSGCKVAGSLAVFSSESAVFLLTLAAVERSVFAKDVMKNGKSSHLRQFQVAALVALLGAAIAGCFPLFHGGQYSASPLCLPFPTGETPSLGFTVTLVLLNSLAFLLMAIIYTKLYCNLEKEDPSENSQSSMIKHVAWLIFTNCIFFCPVAFFSFAPLITAISISPEIMKSVTLIFFPLPACLNPVLYVFFNPKFKDDWKLLKRRVTRKHGSVSVSISSQGGCGEQDFYYDCGMYSHLQGNLTVCDCCESFLLTKPVSCKHLIKSHSCPVLTVASCQRPEAYWSDCGTQSAHSDYADEEDSFVSDSSDQVQACGRACFYQSRGFPLVRYAYNLPRVRD.

The N-terminal stretch at 1–24 (MPGPLRLLCFFALGLLGSAGPSGA) is a signal peptide. The region spanning 25–57 (APPLCAAPCSCDGDRRVDCSGKGLTAVPEGLSA) is the LRRNT domain. Residues 25 to 544 (APPLCAAPCS…LLGSWMIRLT (520 aa)) lie on the Extracellular side of the membrane. 2 disulfides stabilise this stretch: C29-C35 and C33-C43. LRR repeat units lie at residues 58-79 (FTQALDISMNNITQLPEDAFKN), 82-103 (FLEELQLAGNDLSFIHPKALSG), 106-127 (ELKVLTLQNNQLKTVPSEAIRG), 130-151 (ALQSLRLDANHITSVPEDSFEG), 154-177 (QLRHLWLDDNILTEVPVRPLSNLP), 178-199 (TLQALTLALNNISSIPDFAFTN), 202-223 (SLVVLHLHNNKIKSLSQHCFDG), 226-247 (NLETLDLNYNNLDEFPQAIKAL), 249-270 (SLKELGFHSNSISVIPDGAFAG), 273-294 (LLRTIHLYDNPLSFVGNSAFHN), 320-341 (HLESLTLTGTKISSIPDDLCQN), 344-365 (MLRTLDLSYNDIRDLPSFNGCR), 366-387 (ALEEISLQRNQISLIKETTFQG), 390-411 (SLRILDLSRNLIREIHSGAFAK), and 414-435 (TITNLDVSFNELTSFPTEGLNG). The N-linked (GlcNAc...) asparagine glycan is linked to N68. Residues N188 and N199 are each glycosylated (N-linked (GlcNAc...) asparagine). A glycan (N-linked (GlcNAc...) asparagine) is linked at N294. C339 and C364 are oxidised to a cystine. 2 disulfide bridges follow: C470-C522 and C471-C476. The interval 487–512 (NSPQDHSVTKEKGATDAANATSTAES) is disordered. The span at 501-510 (TDAANATSTA) shows a compositional bias: low complexity. A glycan (N-linked (GlcNAc...) asparagine) is linked at N505. A helical transmembrane segment spans residues 545-565 (VWFIFLVALLFNLLVILTVFA). Residues 566–575 (SCSSLPASKL) lie on the Cytoplasmic side of the membrane. The helical transmembrane segment at 576 to 596 (FIGLISVSNLLMGIYTGILTF) threads the bilayer. Over 597–619 (LDAVSWGRFAEFGIWWETGSGCK) the chain is Extracellular. The cysteines at positions 618 and 693 are disulfide-linked. The chain crosses the membrane as a helical span at residues 620-640 (VAGSLAVFSSESAVFLLTLAA). Topologically, residues 641–661 (VERSVFAKDVMKNGKSSHLRQ) are cytoplasmic. Residues 662-682 (FQVAALVALLGAAIAGCFPLF) traverse the membrane as a helical segment. Over 683–703 (HGGQYSASPLCLPFPTGETPS) the chain is Extracellular. The chain crosses the membrane as a helical span at residues 704-724 (LGFTVTLVLLNSLAFLLMAII). Topologically, residues 725 to 756 (YTKLYCNLEKEDPSENSQSSMIKHVAWLIFTN) are cytoplasmic. A helical membrane pass occupies residues 757–777 (CIFFCPVAFFSFAPLITAISI). Topologically, residues 778–783 (SPEIMK) are extracellular. The chain crosses the membrane as a helical span at residues 784-804 (SVTLIFFPLPACLNPVLYVFF). Residues 805–951 (NPKFKDDWKL…YAYNLPRVRD (147 aa)) lie on the Cytoplasmic side of the membrane. A Phosphoserine modification is found at S920.

The protein belongs to the G-protein coupled receptor 1 family.

The protein resides in the cell membrane. Receptor for R-spondins that potentiates the canonical Wnt signaling pathway and is involved in the formation of various organs. Upon binding to R-spondins (RSPO1, RSPO2, RSPO3 or RSPO4), associates with phosphorylated LRP6 and frizzled receptors that are activated by extracellular Wnt receptors, triggering the canonical Wnt signaling pathway to increase expression of target genes. In contrast to classical G-protein coupled receptors, does not activate heterotrimeric G-proteins to transduce the signal. Its function as activator of the Wnt signaling pathway is required for the development of various organs, including liver, kidney, intestine, bone, reproductive tract and eye. May also act as a receptor for norrin (NDP), such results however require additional confirmation in vivo. Required during spermatogenesis to activate the Wnt signaling pathway in peritubular myoid cells. Required for the maintenance of intestinal stem cells and Paneth cell differentiation in postnatal intestinal crypts. Acts as a regulator of bone formation and remodeling. Involved in kidney development; required for maintaining the ureteric bud in an undifferentiated state. Involved in the development of the anterior segment of the eye. Required during erythropoiesis. Also acts as a negative regulator of innate immunity by inhibiting TLR2/TLR4 associated pattern-recognition and pro-inflammatory cytokine production. Plays an important role in regulating the circadian rhythms of plasma lipids, partially through regulating the rhythmic expression of MTTP. Required for proper development of GnRH neurons (gonadotropin-releasing hormone expressing neurons) that control the release of reproductive hormones from the pituitary gland. In Mus musculus (Mouse), this protein is Leucine-rich repeat-containing G-protein coupled receptor 4 (Lgr4).